We begin with the raw amino-acid sequence, 215 residues long: UPF0502 protein YceH (215 aa).

It belongs to the UPF0502 family.

This Salmonella arizonae (strain ATCC BAA-731 / CDC346-86 / RSK2980) protein is UPF0502 protein YceH.